The primary structure comprises 380 residues: Cytochrome b (380 aa).

Transmembrane regions (helical) follow at residues 34-54, 78-99, 114-134, and 179-199; these read FGSLLGICLATQILTGLLLAA, WLIRNLHANGASFFFICIYLHI, WNTGVILLLTLMATAFVGYVL, and FFTLHFLLPFMIMGLTLIHLT. 2 residues coordinate heme b: histidine 84 and histidine 98. Histidine 183 and histidine 197 together coordinate heme b. An a ubiquinone-binding site is contributed by histidine 202. 4 helical membrane-spanning segments follow: residues 227-247, 289-309, 321-341, and 348-368; these read LKDILGFMLMLLPLMTLALFS, LGGVLALAASVLILFLAPLLH, LSQLLFWTLTANLLILTWVGS, and FMIIGQLASLTYFTILLVLFP.

Belongs to the cytochrome b family. The cytochrome bc1 complex contains 11 subunits: 3 respiratory subunits (MT-CYB, CYC1 and UQCRFS1), 2 core proteins (UQCRC1 and UQCRC2) and 6 low-molecular weight proteins (UQCRH/QCR6, UQCRB/QCR7, UQCRQ/QCR8, UQCR10/QCR9, UQCR11/QCR10 and a cleavage product of UQCRFS1). This cytochrome bc1 complex then forms a dimer. Requires heme b as cofactor.

It localises to the mitochondrion inner membrane. Its function is as follows. Component of the ubiquinol-cytochrome c reductase complex (complex III or cytochrome b-c1 complex) that is part of the mitochondrial respiratory chain. The b-c1 complex mediates electron transfer from ubiquinol to cytochrome c. Contributes to the generation of a proton gradient across the mitochondrial membrane that is then used for ATP synthesis. In Anthropoides virgo (Demoiselle crane), this protein is Cytochrome b (MT-CYB).